A 209-amino-acid polypeptide reads, in one-letter code: Pyridoxine/pyridoxamine 5'-phosphate oxidase (209 aa).

Residues 7–10 (REDY) and Lys-64 contribute to the substrate site. FMN contacts are provided by residues 59-64 (RIVLLK), 74-75 (FT), Arg-80, and Lys-81. Residues Tyr-121, Arg-125, and Ser-129 each contribute to the substrate site. FMN-binding positions include 138–139 (QS) and Trp-182. 188 to 190 (RLH) is a substrate binding site. Arg-192 serves as a coordination point for FMN.

Belongs to the pyridoxamine 5'-phosphate oxidase family. Homodimer. FMN serves as cofactor.

The enzyme catalyses pyridoxamine 5'-phosphate + O2 + H2O = pyridoxal 5'-phosphate + H2O2 + NH4(+). It catalyses the reaction pyridoxine 5'-phosphate + O2 = pyridoxal 5'-phosphate + H2O2. Its pathway is cofactor metabolism; pyridoxal 5'-phosphate salvage; pyridoxal 5'-phosphate from pyridoxamine 5'-phosphate: step 1/1. The protein operates within cofactor metabolism; pyridoxal 5'-phosphate salvage; pyridoxal 5'-phosphate from pyridoxine 5'-phosphate: step 1/1. Functionally, catalyzes the oxidation of either pyridoxine 5'-phosphate (PNP) or pyridoxamine 5'-phosphate (PMP) into pyridoxal 5'-phosphate (PLP). In Actinobacillus pleuropneumoniae serotype 7 (strain AP76), this protein is Pyridoxine/pyridoxamine 5'-phosphate oxidase.